Here is a 518-residue protein sequence, read N- to C-terminus: Glutamate--cysteine ligase (518 aa).

The protein belongs to the glutamate--cysteine ligase type 1 family. Type 1 subfamily.

The enzyme catalyses L-cysteine + L-glutamate + ATP = gamma-L-glutamyl-L-cysteine + ADP + phosphate + H(+). The protein operates within sulfur metabolism; glutathione biosynthesis; glutathione from L-cysteine and L-glutamate: step 1/2. This Escherichia coli O8 (strain IAI1) protein is Glutamate--cysteine ligase.